The sequence spans 247 residues: ATP synthase subunit a, chloroplastic (247 aa).

Helical transmembrane passes span 38 to 58 (QVLI…VIAV), 95 to 115 (VPFI…GALL), 134 to 154 (INTT…AGLS), 199 to 219 (LVVV…VMFL), and 220 to 240 (GLFT…AYIG).

The protein belongs to the ATPase A chain family. As to quaternary structure, F-type ATPases have 2 components, CF(1) - the catalytic core - and CF(0) - the membrane proton channel. CF(1) has five subunits: alpha(3), beta(3), gamma(1), delta(1), epsilon(1). CF(0) has four main subunits: a, b, b' and c.

The protein localises to the plastid. It localises to the chloroplast thylakoid membrane. Key component of the proton channel; it plays a direct role in the translocation of protons across the membrane. In Lolium perenne (Perennial ryegrass), this protein is ATP synthase subunit a, chloroplastic.